The chain runs to 163 residues: Small ribosomal subunit protein uS9 (163 aa).

Positions 1 to 11 (MAENTNDSQVV) are enriched in polar residues. The segment at 1-40 (MAENTNDSQVVETEEELTNYTTETNAGAGTGTSAIEPGYG) is disordered. A compositionally biased stretch (low complexity) spans 18 to 27 (TNYTTETNAG).

This sequence belongs to the universal ribosomal protein uS9 family.

This is Small ribosomal subunit protein uS9 from Bifidobacterium longum (strain DJO10A).